A 186-amino-acid chain; its full sequence is Elongation factor P (186 aa).

Belongs to the elongation factor P family.

The protein localises to the cytoplasm. It participates in protein biosynthesis; polypeptide chain elongation. In terms of biological role, involved in peptide bond synthesis. Stimulates efficient translation and peptide-bond synthesis on native or reconstituted 70S ribosomes in vitro. Probably functions indirectly by altering the affinity of the ribosome for aminoacyl-tRNA, thus increasing their reactivity as acceptors for peptidyl transferase. This is Elongation factor P from Brucella canis (strain ATCC 23365 / NCTC 10854 / RM-666).